A 275-amino-acid chain; its full sequence is uncharacterized protein (275 aa).

This is an uncharacterized protein from Methanocaldococcus jannaschii (strain ATCC 43067 / DSM 2661 / JAL-1 / JCM 10045 / NBRC 100440) (Methanococcus jannaschii).